The chain runs to 391 residues: tRNA-specific 2-thiouridylase MnmA (391 aa).

Residues 9 to 16 (GMSGGVDS) and Met35 contribute to the ATP site. Residues 95-97 (NPD) are interaction with target base in tRNA. The Nucleophile role is filled by Cys100. Cys100 and Cys196 form a disulfide bridge. Gly124 is an ATP binding site. The segment at 146–148 (KDQ) is interaction with tRNA. Cys196 functions as the Cysteine persulfide intermediate in the catalytic mechanism. The tract at residues 308-309 (RY) is interaction with tRNA.

This sequence belongs to the MnmA/TRMU family.

The protein localises to the cytoplasm. The catalysed reaction is S-sulfanyl-L-cysteinyl-[protein] + uridine(34) in tRNA + AH2 + ATP = 2-thiouridine(34) in tRNA + L-cysteinyl-[protein] + A + AMP + diphosphate + H(+). Its function is as follows. Catalyzes the 2-thiolation of uridine at the wobble position (U34) of tRNA, leading to the formation of s(2)U34. The chain is tRNA-specific 2-thiouridylase MnmA from Burkholderia cenocepacia (strain HI2424).